The chain runs to 121 residues: Large ribosomal subunit protein uL14c (121 aa).

The protein belongs to the universal ribosomal protein uL14 family. Part of the 50S ribosomal subunit.

It is found in the plastid. Its subcellular location is the chloroplast. Binds to 23S rRNA. The chain is Large ribosomal subunit protein uL14c from Pelargonium hortorum (Common geranium).